The following is a 313-amino-acid chain: MTSKPSNDRLHSYLDLQPEVAAALSQGRPVVALESTIISHGMPYPQNVEMARGVEQIVRDNGAVPATIAVLGGRLKVGLSADELELLATDKAVQKISTRDLPVTVALGGHGATTVASTMRIAALAGIRVFATGGTGGVHRGAGETMDISADLLELARTDVCVVSAGVKSILDIGLTLEVLETQGVPAITLGADEFPAFYSRRSGFSSPLTVQTPAEAARVLKVKWDLGLTGGVLLANPVPETAEIPAEEMETHITRALADMAALGLSGKDTTPYLLGRIVELTGGRSLETNIALVRHNAAAAAQVAAEYARLG.

The Proton donor role is filled by glutamate 34. Substrate contacts are provided by lysine 95 and valine 115. Residue aspartate 147 coordinates Mn(2+). Substrate is bound at residue 149 to 151 (SAD). Lysine 168 acts as the Nucleophile in catalysis.

The protein belongs to the pseudouridine-5'-phosphate glycosidase family. In terms of assembly, homotrimer. Requires Mn(2+) as cofactor.

It catalyses the reaction D-ribose 5-phosphate + uracil = psi-UMP + H2O. Catalyzes the reversible cleavage of pseudouridine 5'-phosphate (PsiMP) to ribose 5-phosphate and uracil. Functions biologically in the cleavage direction, as part of a pseudouridine degradation pathway. The protein is Pseudouridine-5'-phosphate glycosidase of Deinococcus radiodurans (strain ATCC 13939 / DSM 20539 / JCM 16871 / CCUG 27074 / LMG 4051 / NBRC 15346 / NCIMB 9279 / VKM B-1422 / R1).